The chain runs to 22 residues: 50 kDa cell wall protein (22 aa).

Its subcellular location is the secreted. The protein localises to the cell wall. In Nicotiana tabacum (Common tobacco), this protein is 50 kDa cell wall protein.